Reading from the N-terminus, the 606-residue chain is UPF0329 protein ECU06_0090 (606 aa).

The interval Lys317–Asn401 is disordered. The span at Glu328–Gly353 shows a compositional bias: basic and acidic residues. The segment covering Ala354–Ser367 has biased composition (basic residues). Positions Ser381 to Asn401 are enriched in basic and acidic residues.

This sequence belongs to the UPF0329 family.

The chain is UPF0329 protein ECU06_0090 from Encephalitozoon cuniculi (strain GB-M1) (Microsporidian parasite).